The following is a 509-amino-acid chain: 2-succinyl-5-enolpyruvyl-6-hydroxy-3-cyclohexene-1-carboxylate synthase (509 aa).

Belongs to the TPP enzyme family. MenD subfamily. As to quaternary structure, homodimer. Requires Mg(2+) as cofactor. Mn(2+) is required as a cofactor. The cofactor is thiamine diphosphate.

It catalyses the reaction isochorismate + 2-oxoglutarate + H(+) = 5-enolpyruvoyl-6-hydroxy-2-succinyl-cyclohex-3-ene-1-carboxylate + CO2. Its pathway is quinol/quinone metabolism; 1,4-dihydroxy-2-naphthoate biosynthesis; 1,4-dihydroxy-2-naphthoate from chorismate: step 2/7. It participates in quinol/quinone metabolism; menaquinone biosynthesis. Its function is as follows. Catalyzes the thiamine diphosphate-dependent decarboxylation of 2-oxoglutarate and the subsequent addition of the resulting succinic semialdehyde-thiamine pyrophosphate anion to isochorismate to yield 2-succinyl-5-enolpyruvyl-6-hydroxy-3-cyclohexene-1-carboxylate (SEPHCHC). This is 2-succinyl-5-enolpyruvyl-6-hydroxy-3-cyclohexene-1-carboxylate synthase from Corynebacterium diphtheriae (strain ATCC 700971 / NCTC 13129 / Biotype gravis).